Here is a 408-residue protein sequence, read N- to C-terminus: NADH-quinone oxidoreductase subunit D (408 aa).

It belongs to the complex I 49 kDa subunit family. As to quaternary structure, NDH-1 is composed of 14 different subunits. Subunits NuoB, C, D, E, F, and G constitute the peripheral sector of the complex.

It is found in the cell inner membrane. The enzyme catalyses a quinone + NADH + 5 H(+)(in) = a quinol + NAD(+) + 4 H(+)(out). NDH-1 shuttles electrons from NADH, via FMN and iron-sulfur (Fe-S) centers, to quinones in the respiratory chain. The immediate electron acceptor for the enzyme in this species is believed to be ubiquinone. Couples the redox reaction to proton translocation (for every two electrons transferred, four hydrogen ions are translocated across the cytoplasmic membrane), and thus conserves the redox energy in a proton gradient. The polypeptide is NADH-quinone oxidoreductase subunit D (Campylobacter jejuni subsp. jejuni serotype O:2 (strain ATCC 700819 / NCTC 11168)).